Here is a 207-residue protein sequence, read N- to C-terminus: Histidine biosynthesis bifunctional protein HisIE (207 aa).

Residues 1-115 (MLSKKENLLK…FFLKENTLNF (115 aa)) form a phosphoribosyl-AMP cyclohydrolase region. Residues 116-207 (LSKLEDLIED…NLKKRKTEKL (92 aa)) are phosphoribosyl-ATP pyrophosphohydrolase.

This sequence in the N-terminal section; belongs to the PRA-CH family. The protein in the C-terminal section; belongs to the PRA-PH family.

It is found in the cytoplasm. The enzyme catalyses 1-(5-phospho-beta-D-ribosyl)-ATP + H2O = 1-(5-phospho-beta-D-ribosyl)-5'-AMP + diphosphate + H(+). The catalysed reaction is 1-(5-phospho-beta-D-ribosyl)-5'-AMP + H2O = 1-(5-phospho-beta-D-ribosyl)-5-[(5-phospho-beta-D-ribosylamino)methylideneamino]imidazole-4-carboxamide. Its pathway is amino-acid biosynthesis; L-histidine biosynthesis; L-histidine from 5-phospho-alpha-D-ribose 1-diphosphate: step 2/9. The protein operates within amino-acid biosynthesis; L-histidine biosynthesis; L-histidine from 5-phospho-alpha-D-ribose 1-diphosphate: step 3/9. This Buchnera aphidicola subsp. Schizaphis graminum (strain Sg) protein is Histidine biosynthesis bifunctional protein HisIE (hisI).